The following is a 65-amino-acid chain: Beta-toxin Tf4a (65 aa).

The LCN-type CS-alpha/beta domain occupies 2–63 (KEGYPADSKG…VWDSATNKCG (62 aa)). 4 disulfide bridges follow: cysteine 12-cysteine 62, cysteine 16-cysteine 38, cysteine 24-cysteine 43, and cysteine 28-cysteine 45. The residue at position 62 (cysteine 62) is a Cysteine amide.

This sequence belongs to the long (4 C-C) scorpion toxin superfamily. Sodium channel inhibitor family. Alpha subfamily. As to expression, expressed by the venom gland.

The protein localises to the secreted. Its function is as follows. Alpha toxins bind voltage-independently at site-3 of sodium channels (Nav) and inhibit the inactivation of the activated channels, thereby blocking neuronal transmission. This toxin is toxic to frogs but non-toxic to insect larvae (T.molitor), mammals (rats) and crustaceans (crabs) at the doses assayed. The chain is Beta-toxin Tf4a from Tityus fasciolatus (Central Brazilian scorpion).